A 127-amino-acid chain; its full sequence is Glycine cleavage system H protein (127 aa).

Positions 24–105 constitute a Lipoyl-binding domain; sequence TALVGITDFA…YNEGWIVKMK (82 aa). Position 65 is an N6-lipoyllysine (Lys-65).

Belongs to the GcvH family. The glycine cleavage system is composed of four proteins: P, T, L and H. The cofactor is (R)-lipoate.

Its function is as follows. The glycine cleavage system catalyzes the degradation of glycine. The H protein shuttles the methylamine group of glycine from the P protein to the T protein. The chain is Glycine cleavage system H protein from Chlorobaculum tepidum (strain ATCC 49652 / DSM 12025 / NBRC 103806 / TLS) (Chlorobium tepidum).